The primary structure comprises 345 residues: Aspartate-semialdehyde dehydrogenase (345 aa).

NADP(+) is bound by residues 11–14 (TGQV) and 39–40 (RS). Position 99 (Arg-99) interacts with phosphate. Catalysis depends on Cys-130, which acts as the Acyl-thioester intermediate. A substrate-binding site is contributed by Gln-157. 160 to 161 (SG) serves as a coordination point for NADP(+). Lys-227 contacts phosphate. Position 249 (Arg-249) interacts with substrate. The Proton acceptor role is filled by His-256. Asn-325 contacts NADP(+).

The protein belongs to the aspartate-semialdehyde dehydrogenase family. Homodimer.

It catalyses the reaction L-aspartate 4-semialdehyde + phosphate + NADP(+) = 4-phospho-L-aspartate + NADPH + H(+). Its pathway is amino-acid biosynthesis; L-lysine biosynthesis via DAP pathway; (S)-tetrahydrodipicolinate from L-aspartate: step 2/4. It participates in amino-acid biosynthesis; L-methionine biosynthesis via de novo pathway; L-homoserine from L-aspartate: step 2/3. The protein operates within amino-acid biosynthesis; L-threonine biosynthesis; L-threonine from L-aspartate: step 2/5. In terms of biological role, catalyzes the NADPH-dependent formation of L-aspartate-semialdehyde (L-ASA) by the reductive dephosphorylation of L-aspartyl-4-phosphate. This Mycobacterium bovis (strain ATCC BAA-935 / AF2122/97) protein is Aspartate-semialdehyde dehydrogenase.